Reading from the N-terminus, the 743-residue chain is MFHFNRCQHLKKITQKCFSSIHVKTDKHAQQFLSRTFALAELRKSWYSTHSLVGDKNIILMGPPGAGKTTVGRIIGQKLGCCVIDVDDDILEKTWNMSVSEKLQDVGNEQFLEEEGKAVLNFSASGSVISLTGSNPMHDASMWHLKKNGVIVYLDVPLLDLIHRLKLMKIDRIVGRNSGTSMKDLLKFRRQYYKKWYDARVFCESGASPEEVADKVLNAIKRYQDVDSETFISTRHVWPKDCEQKVSAKFFSEAVIEGLASDGGLFVPAKEFPKLSCGEWKSLVGATYIERAQILLERCIHPADIPAARLGEMIETAYGENFACSKIAPVRHLSGNQFILELFHGPTGSFKDLSLQLMPHIFAHCIPPSCNYMILVATSGDTGSAVLNGFSRLNKNDKQRIAVVTFFPENGVSDFQKAQIIGSQRENGWAVGVESDFDFCQTAIKRIFNDSDFTGFLTVEYGTILSSANSINWGRLLPQVVYHASAYLDLVSQGFISFGSPVDVCIPTGNFGNILAAVYAKMMGIPIRKFICASNQNRVLTDFIKTGHYDLRERKLAQTFSPSIDILKSSNLERHLHLMANKDGQLMTELFNQLESQHHFQIEKVLVEKLQQDFVADWCSEGECLAAINSTYNTSGYILDPHTAVAKVVADRVQDKTCPVIVSSTAHYSKFAPAIMQALKIKEINETSSSQLYLLGSYNALPPLHEALLERTKQQEKMEYQVCAADMNVLKSHVEKLIQNQFI.

Residue Lys-281 is modified to N6-acetyllysine. Lys-351 is modified (N6-(pyridoxal phosphate)lysine).

The protein belongs to the threonine synthase family. The cofactor is pyridoxal 5'-phosphate.

The chain is Threonine synthase-like 1 (THNSL1) from Macaca fascicularis (Crab-eating macaque).